The primary structure comprises 342 residues: Holliday junction branch migration complex subunit RuvB (342 aa).

Positions 1 to 179 (MTNILSPEKS…FGIPMRLNFY (179 aa)) are large ATPase domain (RuvB-L). ATP contacts are provided by residues Ile18, Arg19, Gly60, Lys63, Thr64, Thr65, 126–128 (EDF), Arg169, Tyr179, and Arg216. Thr64 provides a ligand contact to Mg(2+). Residues 180–250 (NTGELKKVLN…ISDFGLNRLE (71 aa)) form a small ATPAse domain (RuvB-S) region. The interval 253–342 (RIGLDSNDYR…HQFNIFNENE (90 aa)) is head domain (RuvB-H). Residues Arg289, Arg308, and Arg313 each contribute to the DNA site.

It belongs to the RuvB family. As to quaternary structure, homohexamer. Forms an RuvA(8)-RuvB(12)-Holliday junction (HJ) complex. HJ DNA is sandwiched between 2 RuvA tetramers; dsDNA enters through RuvA and exits via RuvB. An RuvB hexamer assembles on each DNA strand where it exits the tetramer. Each RuvB hexamer is contacted by two RuvA subunits (via domain III) on 2 adjacent RuvB subunits; this complex drives branch migration. In the full resolvosome a probable DNA-RuvA(4)-RuvB(12)-RuvC(2) complex forms which resolves the HJ.

It localises to the cytoplasm. It carries out the reaction ATP + H2O = ADP + phosphate + H(+). In terms of biological role, the RuvA-RuvB-RuvC complex processes Holliday junction (HJ) DNA during genetic recombination and DNA repair, while the RuvA-RuvB complex plays an important role in the rescue of blocked DNA replication forks via replication fork reversal (RFR). RuvA specifically binds to HJ cruciform DNA, conferring on it an open structure. The RuvB hexamer acts as an ATP-dependent pump, pulling dsDNA into and through the RuvAB complex. RuvB forms 2 homohexamers on either side of HJ DNA bound by 1 or 2 RuvA tetramers; 4 subunits per hexamer contact DNA at a time. Coordinated motions by a converter formed by DNA-disengaged RuvB subunits stimulates ATP hydrolysis and nucleotide exchange. Immobilization of the converter enables RuvB to convert the ATP-contained energy into a lever motion, pulling 2 nucleotides of DNA out of the RuvA tetramer per ATP hydrolyzed, thus driving DNA branch migration. The RuvB motors rotate together with the DNA substrate, which together with the progressing nucleotide cycle form the mechanistic basis for DNA recombination by continuous HJ branch migration. Branch migration allows RuvC to scan DNA until it finds its consensus sequence, where it cleaves and resolves cruciform DNA. This is Holliday junction branch migration complex subunit RuvB from Rickettsia conorii (strain ATCC VR-613 / Malish 7).